We begin with the raw amino-acid sequence, 210 residues long: ATP phosphoribosyltransferase (210 aa).

Belongs to the ATP phosphoribosyltransferase family. Short subfamily. In terms of assembly, heteromultimer composed of HisG and HisZ subunits.

It is found in the cytoplasm. It carries out the reaction 1-(5-phospho-beta-D-ribosyl)-ATP + diphosphate = 5-phospho-alpha-D-ribose 1-diphosphate + ATP. It participates in amino-acid biosynthesis; L-histidine biosynthesis; L-histidine from 5-phospho-alpha-D-ribose 1-diphosphate: step 1/9. Functionally, catalyzes the condensation of ATP and 5-phosphoribose 1-diphosphate to form N'-(5'-phosphoribosyl)-ATP (PR-ATP). Has a crucial role in the pathway because the rate of histidine biosynthesis seems to be controlled primarily by regulation of HisG enzymatic activity. The protein is ATP phosphoribosyltransferase (hisG) of Synechocystis sp. (strain ATCC 27184 / PCC 6803 / Kazusa).